The primary structure comprises 120 residues: NAD(P)H-quinone oxidoreductase subunit 3, chloroplastic (120 aa).

3 helical membrane-spanning segments follow: residues 7 to 27 (YDSF…AFSI), 63 to 83 (YMFA…YPWA), and 89 to 109 (LGLF…VGLV).

Belongs to the complex I subunit 3 family. In terms of assembly, NDH is composed of at least 16 different subunits, 5 of which are encoded in the nucleus.

The protein localises to the plastid. It localises to the chloroplast thylakoid membrane. The enzyme catalyses a plastoquinone + NADH + (n+1) H(+)(in) = a plastoquinol + NAD(+) + n H(+)(out). The catalysed reaction is a plastoquinone + NADPH + (n+1) H(+)(in) = a plastoquinol + NADP(+) + n H(+)(out). Its function is as follows. NDH shuttles electrons from NAD(P)H:plastoquinone, via FMN and iron-sulfur (Fe-S) centers, to quinones in the photosynthetic chain and possibly in a chloroplast respiratory chain. The immediate electron acceptor for the enzyme in this species is believed to be plastoquinone. Couples the redox reaction to proton translocation, and thus conserves the redox energy in a proton gradient. The chain is NAD(P)H-quinone oxidoreductase subunit 3, chloroplastic from Adiantum capillus-veneris (Maidenhair fern).